Consider the following 147-residue polypeptide: Putative pre-16S rRNA nuclease (147 aa).

This sequence belongs to the YqgF nuclease family.

Its subcellular location is the cytoplasm. In terms of biological role, could be a nuclease involved in processing of the 5'-end of pre-16S rRNA. In Polynucleobacter necessarius subsp. necessarius (strain STIR1), this protein is Putative pre-16S rRNA nuclease.